Reading from the N-terminus, the 439-residue chain is ATP-dependent RNA helicase SrmB (439 aa).

The Q motif signature appears at 4 to 32 (SQFEQFDLSPELLKALEKKGYSRPTAIQM). Residues 35–209 (IPAAMEESDV…AERLLNDPVK (175 aa)) form the Helicase ATP-binding domain. Position 48 to 55 (48 to 55 (APTGTGKT)) interacts with ATP. A DEAD box motif is present at residues 157 to 160 (DEAD). The 151-residue stretch at 237–387 (KLLARFIETE…GLEPRTKPPK (151 aa)) folds into the Helicase C-terminal domain. The segment covering 381–393 (PRTKPPKDGEVKS) has biased composition (basic and acidic residues). The tract at residues 381–439 (PRTKPPKDGEVKSVSKKQKARIKEKREEKKKTEAKKKVKLRHKDTKNIGKRRKPSNSNV) is disordered. Composition is skewed to basic residues over residues 394-403 (VSKKQKARIK) and 412-439 (TEAK…NSNV).

This sequence belongs to the DEAD box helicase family. SrmB subfamily. Interacts with the 50S ribosomal subunit.

It localises to the cytoplasm. The enzyme catalyses ATP + H2O = ADP + phosphate + H(+). DEAD-box RNA helicase involved in the assembly of the 50S ribosomal subunit at low temperature. Exhibits RNA-stimulated ATP hydrolysis and RNA unwinding activity. The sequence is that of ATP-dependent RNA helicase SrmB from Haemophilus influenzae (strain ATCC 51907 / DSM 11121 / KW20 / Rd).